The sequence spans 245 residues: MLLIPAIDLKDGHCVRLRQGDMDQSTTFGENPAAMARQWIDAGARRLHLVDLNGALAGMPKNYGAIKSILKEVGDDIPVQLGGGIRDLDTIEKYIDGGLRYVIIGTAAVKNPGFLKDACSAFGGHIIVGLDARDGKVATDGWSKLTGHGVVDLARKFEDWGVESIIYTDIGRDGMLSGINIDATVALAQALSIPVIASGGLSGMADIEQLCAVQDEGIEGVICGRAIYSGDLDFAAAQARADEMG.

The active-site Proton acceptor is the Asp-8. Residue Asp-131 is the Proton donor of the active site.

The protein belongs to the HisA/HisF family.

The protein resides in the cytoplasm. It carries out the reaction 1-(5-phospho-beta-D-ribosyl)-5-[(5-phospho-beta-D-ribosylamino)methylideneamino]imidazole-4-carboxamide = 5-[(5-phospho-1-deoxy-D-ribulos-1-ylimino)methylamino]-1-(5-phospho-beta-D-ribosyl)imidazole-4-carboxamide. The protein operates within amino-acid biosynthesis; L-histidine biosynthesis; L-histidine from 5-phospho-alpha-D-ribose 1-diphosphate: step 4/9. This is 1-(5-phosphoribosyl)-5-[(5-phosphoribosylamino)methylideneamino] imidazole-4-carboxamide isomerase from Verminephrobacter eiseniae (strain EF01-2).